The primary structure comprises 134 residues: Small ribosomal subunit protein bS6 (134 aa).

The segment at 97-134 is disordered; that stretch reads TDVSPIKASEGREDRRSAPQREERNHDNSDEVSEESED. The span at 105–125 shows a compositional bias: basic and acidic residues; the sequence is SEGREDRRSAPQREERNHDNS.

This sequence belongs to the bacterial ribosomal protein bS6 family.

Binds together with bS18 to 16S ribosomal RNA. The protein is Small ribosomal subunit protein bS6 of Marinomonas sp. (strain MWYL1).